The sequence spans 210 residues: Pyridoxine/pyridoxamine 5'-phosphate oxidase (210 aa).

Substrate contacts are provided by residues 7–10 (REDY) and Lys-65. FMN contacts are provided by residues 60 to 65 (RVVLLK), 75 to 76 (FT), Arg-81, Lys-82, and Gln-104. Substrate is bound by residues Tyr-122, Arg-126, and Ser-130. Residues 139 to 140 (QS) and Trp-183 contribute to the FMN site. 189-191 (RLH) contributes to the substrate binding site. Residue Arg-193 coordinates FMN.

It belongs to the pyridoxamine 5'-phosphate oxidase family. Homodimer. The cofactor is FMN.

It catalyses the reaction pyridoxamine 5'-phosphate + O2 + H2O = pyridoxal 5'-phosphate + H2O2 + NH4(+). It carries out the reaction pyridoxine 5'-phosphate + O2 = pyridoxal 5'-phosphate + H2O2. It functions in the pathway cofactor metabolism; pyridoxal 5'-phosphate salvage; pyridoxal 5'-phosphate from pyridoxamine 5'-phosphate: step 1/1. The protein operates within cofactor metabolism; pyridoxal 5'-phosphate salvage; pyridoxal 5'-phosphate from pyridoxine 5'-phosphate: step 1/1. In terms of biological role, catalyzes the oxidation of either pyridoxine 5'-phosphate (PNP) or pyridoxamine 5'-phosphate (PMP) into pyridoxal 5'-phosphate (PLP). The sequence is that of Pyridoxine/pyridoxamine 5'-phosphate oxidase from Actinobacillus succinogenes (strain ATCC 55618 / DSM 22257 / CCUG 43843 / 130Z).